The chain runs to 232 residues: Small ribosomal subunit protein uS2 (232 aa).

It belongs to the universal ribosomal protein uS2 family.

The chain is Small ribosomal subunit protein uS2 from Syntrophomonas wolfei subsp. wolfei (strain DSM 2245B / Goettingen).